The following is a 272-amino-acid chain: 4-hydroxy-tetrahydrodipicolinate reductase (272 aa).

NAD(+) contacts are provided by residues 11–16 and Glu-37; that span reads GVSGRM. Position 38 (Arg-38) interacts with NADP(+). NAD(+) contacts are provided by residues 101–103 and 125–128; these read GTT and AGNM. His-158 serves as the catalytic Proton donor/acceptor. His-159 is a binding site for (S)-2,3,4,5-tetrahydrodipicolinate. The Proton donor role is filled by Lys-162. 168 to 169 contributes to the (S)-2,3,4,5-tetrahydrodipicolinate binding site; the sequence is GT.

This sequence belongs to the DapB family.

Its subcellular location is the cytoplasm. The enzyme catalyses (S)-2,3,4,5-tetrahydrodipicolinate + NAD(+) + H2O = (2S,4S)-4-hydroxy-2,3,4,5-tetrahydrodipicolinate + NADH + H(+). The catalysed reaction is (S)-2,3,4,5-tetrahydrodipicolinate + NADP(+) + H2O = (2S,4S)-4-hydroxy-2,3,4,5-tetrahydrodipicolinate + NADPH + H(+). It functions in the pathway amino-acid biosynthesis; L-lysine biosynthesis via DAP pathway; (S)-tetrahydrodipicolinate from L-aspartate: step 4/4. In terms of biological role, catalyzes the conversion of 4-hydroxy-tetrahydrodipicolinate (HTPA) to tetrahydrodipicolinate. The polypeptide is 4-hydroxy-tetrahydrodipicolinate reductase (Roseobacter denitrificans (strain ATCC 33942 / OCh 114) (Erythrobacter sp. (strain OCh 114))).